The sequence spans 208 residues: MSNPQAERLVTFLIENGIQDQKVLDAIYLLPRESFLSQAMHHQAYDNNALPIGQGQTISQPYIVAKMTELLELQQDSRVLEIGTGSGYQTAVLAQLVDHVYSVERIKSLQWDAKRRLKQLDFYNISTKHGDGWQGWSSKAPFDAIIVTAAAESIPQALLQQLKDGGRLLIPVGDDEQQLLKIVRHGDEFLSSVIEMVRFVPLVPGELA.

Ser-59 is a catalytic residue.

The protein belongs to the methyltransferase superfamily. L-isoaspartyl/D-aspartyl protein methyltransferase family.

It localises to the cytoplasm. The enzyme catalyses [protein]-L-isoaspartate + S-adenosyl-L-methionine = [protein]-L-isoaspartate alpha-methyl ester + S-adenosyl-L-homocysteine. Catalyzes the methyl esterification of L-isoaspartyl residues in peptides and proteins that result from spontaneous decomposition of normal L-aspartyl and L-asparaginyl residues. It plays a role in the repair and/or degradation of damaged proteins. This Vibrio atlanticus (strain LGP32) (Vibrio splendidus (strain Mel32)) protein is Protein-L-isoaspartate O-methyltransferase.